The following is a 246-amino-acid chain: Aliphatic sulfonates import ATP-binding protein SsuB 2 (246 aa).

One can recognise an ABC transporter domain in the interval 4-218 (VTVRGLRRAF…RRDPRFEQAR (215 aa)). Position 36–43 (36–43 (GRSGGGKT)) interacts with ATP.

This sequence belongs to the ABC transporter superfamily. Aliphatic sulfonates importer (TC 3.A.1.17.2) family. In terms of assembly, the complex is composed of two ATP-binding proteins (SsuB), two transmembrane proteins (SsuC) and a solute-binding protein (SsuA).

The protein resides in the cell membrane. The catalysed reaction is ATP + H2O + aliphatic sulfonate-[sulfonate-binding protein]Side 1 = ADP + phosphate + aliphatic sulfonateSide 2 + [sulfonate-binding protein]Side 1.. Functionally, part of the ABC transporter complex SsuABC involved in aliphatic sulfonates import. Responsible for energy coupling to the transport system. This chain is Aliphatic sulfonates import ATP-binding protein SsuB 2, found in Frankia alni (strain DSM 45986 / CECT 9034 / ACN14a).